The chain runs to 921 residues: Protein translocase subunit SecA (921 aa).

ATP-binding positions include Q87, 105–109 (GEGKT), and D516. Residues C905, C907, C916, and H917 each coordinate Zn(2+).

The protein belongs to the SecA family. As to quaternary structure, monomer and homodimer. Part of the essential Sec protein translocation apparatus which comprises SecA, SecYEG and auxiliary proteins SecDF-YajC and YidC. Zn(2+) serves as cofactor.

It is found in the cell inner membrane. The protein resides in the cytoplasm. It catalyses the reaction ATP + H2O + cellular proteinSide 1 = ADP + phosphate + cellular proteinSide 2.. Functionally, part of the Sec protein translocase complex. Interacts with the SecYEG preprotein conducting channel. Has a central role in coupling the hydrolysis of ATP to the transfer of proteins into and across the cell membrane, serving both as a receptor for the preprotein-SecB complex and as an ATP-driven molecular motor driving the stepwise translocation of polypeptide chains across the membrane. The chain is Protein translocase subunit SecA from Albidiferax ferrireducens (strain ATCC BAA-621 / DSM 15236 / T118) (Rhodoferax ferrireducens).